Here is a 214-residue protein sequence, read N- to C-terminus: Adenylate kinase (214 aa).

10–15 (GAGKGT) is a binding site for ATP. The tract at residues 30-59 (STGDMFRDHKARGTEIGKQVQAIMDAGGLV) is NMP. AMP-binding positions include Thr31, Arg36, 57-59 (GLV), 85-88 (GYPR), and Gln92. An LID region spans residues 126 to 163 (GRRSCPRCGAVYHVSQNPPHRAGFCDRDDTALVQREDD). ATP is bound at residue Arg127. Residues Cys130 and Cys133 each contribute to the Zn(2+) site. 136-137 (VY) is an ATP binding site. Zn(2+) contacts are provided by Cys150 and Asp153. Residues Arg160 and Arg171 each contribute to the AMP site. Gly199 is an ATP binding site.

Belongs to the adenylate kinase family. Monomer.

The protein localises to the cytoplasm. The catalysed reaction is AMP + ATP = 2 ADP. Its pathway is purine metabolism; AMP biosynthesis via salvage pathway; AMP from ADP: step 1/1. Its function is as follows. Catalyzes the reversible transfer of the terminal phosphate group between ATP and AMP. Plays an important role in cellular energy homeostasis and in adenine nucleotide metabolism. In Anaeromyxobacter sp. (strain K), this protein is Adenylate kinase.